The sequence spans 365 residues: Protein YIM1 (365 aa).

The protein belongs to the YIM1 family.

The protein resides in the lipid droplet. The protein localises to the mitochondrion. This Saccharomyces cerevisiae (strain ATCC 204508 / S288c) (Baker's yeast) protein is Protein YIM1 (YIM1).